The primary structure comprises 142 residues: MKLKIKKLNQEALIPAYQTKEAAGFDLHSIEDVIIKPGERKLIGTGLAFEIEFGYEVQIRPRSGLAFKHGITVLNTPGTIDSDYRGEIKVLLINHSNEAFEIKKEERIAQAVIAPVVQAEIIEVEELSDTERGAGGFGSTGK.

Substrate is bound by residues 62 to 64 (RSG), asparagine 75, 79 to 81 (TID), and lysine 89.

It belongs to the dUTPase family. It depends on Mg(2+) as a cofactor.

The catalysed reaction is dUTP + H2O = dUMP + diphosphate + H(+). It participates in pyrimidine metabolism; dUMP biosynthesis; dUMP from dCTP (dUTP route): step 2/2. This enzyme is involved in nucleotide metabolism: it produces dUMP, the immediate precursor of thymidine nucleotides and it decreases the intracellular concentration of dUTP so that uracil cannot be incorporated into DNA. The chain is Deoxyuridine 5'-triphosphate nucleotidohydrolase from Nautilia profundicola (strain ATCC BAA-1463 / DSM 18972 / AmH).